Here is a 423-residue protein sequence, read N- to C-terminus: UDP-N-acetylglucosamine 1-carboxyvinyltransferase (423 aa).

Residue 22-23 participates in phosphoenolpyruvate binding; the sequence is KN. R93 provides a ligand contact to UDP-N-acetyl-alpha-D-glucosamine. Catalysis depends on C117, which acts as the Proton donor. C117 is modified (2-(S-cysteinyl)pyruvic acid O-phosphothioketal). Residues 122–126, D308, and I330 contribute to the UDP-N-acetyl-alpha-D-glucosamine site; that span reads RPVDL.

The protein belongs to the EPSP synthase family. MurA subfamily.

The protein resides in the cytoplasm. It catalyses the reaction phosphoenolpyruvate + UDP-N-acetyl-alpha-D-glucosamine = UDP-N-acetyl-3-O-(1-carboxyvinyl)-alpha-D-glucosamine + phosphate. Its pathway is cell wall biogenesis; peptidoglycan biosynthesis. Its function is as follows. Cell wall formation. Adds enolpyruvyl to UDP-N-acetylglucosamine. This is UDP-N-acetylglucosamine 1-carboxyvinyltransferase from Maricaulis maris (strain MCS10) (Caulobacter maris).